The primary structure comprises 226 residues: Sugar fermentation stimulation protein homolog (226 aa).

Belongs to the SfsA family.

This is Sugar fermentation stimulation protein homolog from Ruminiclostridium cellulolyticum (strain ATCC 35319 / DSM 5812 / JCM 6584 / H10) (Clostridium cellulolyticum).